A 168-amino-acid chain; its full sequence is Ribosome maturation factor RimM (168 aa).

The region spanning 96–168 (EGDYYWTDLI…IIVVEWDADF (73 aa)) is the PRC barrel domain.

The protein belongs to the RimM family. In terms of assembly, binds ribosomal protein uS19.

It is found in the cytoplasm. Functionally, an accessory protein needed during the final step in the assembly of 30S ribosomal subunit, possibly for assembly of the head region. Essential for efficient processing of 16S rRNA. May be needed both before and after RbfA during the maturation of 16S rRNA. It has affinity for free ribosomal 30S subunits but not for 70S ribosomes. The sequence is that of Ribosome maturation factor RimM from Coxiella burnetii (strain Dugway 5J108-111).